The sequence spans 279 residues: HTH-type transcriptional regulator HdfR (279 aa).

An HTH lysR-type domain is found at 1–58 (MDTELLKTFLEVSRTRHFGRAAESLYLTQSAVSFRIRQLENQLGVNLFTRHRNNIRLT). The segment at residues 18–37 (FGRAAESLYLTQSAVSFRIR) is a DNA-binding region (H-T-H motif).

This sequence belongs to the LysR transcriptional regulatory family.

Functionally, negatively regulates the transcription of the flagellar master operon flhDC by binding to the upstream region of the operon. This is HTH-type transcriptional regulator HdfR from Escherichia coli O7:K1 (strain IAI39 / ExPEC).